Reading from the N-terminus, the 356-residue chain is Stomatin-like protein 2, mitochondrial (356 aa).

The transit peptide at 1–28 (MLARAARGTGALLLKGSVQASARAPRRA) directs the protein to the mitochondrion. The residue at position 17 (serine 17) is a Phosphoserine; by PKC/PRKCZ. Tyrosine 124 carries the post-translational modification Phosphotyrosine. Lysine 145 is modified (N6-acetyllysine; alternate). Residue lysine 145 is modified to N6-succinyllysine; alternate. Residues 215–252 (INVAEGKKQAQILASEAEKAEQINQAAGEASAVLAKAK) adopt a coiled-coil conformation. Lysine 233 is modified (N6-acetyllysine). The interval 326-356 (EAQDSVSSRSSRDVRSTDASLDEELDRVKLS) is disordered. Phosphoserine is present on serine 330.

It belongs to the band 7/mec-2 family. Forms homooligomers. Interacts with MFN2; may form heterooligomers with this mediator of mitochondrial fusion. Interacts with PHB1 and PHB2; stabilizes and recruits them to cardiolipin-enriched mitochondrial membranes. Interacts with CACNA2D2.

It is found in the cell membrane. The protein resides in the mitochondrion. The protein localises to the mitochondrion inner membrane. It localises to the mitochondrion intermembrane space. Its subcellular location is the membrane raft. It is found in the cytoplasm. The protein resides in the cytoskeleton. In terms of biological role, mitochondrial protein that probably regulates the biogenesis and the activity of mitochondria. Stimulates cardiolipin biosynthesis, binds cardiolipin-enriched membranes where it recruits and stabilizes some proteins including prohibitin and may therefore act in the organization of functional microdomains in mitochondrial membranes. Through regulation of the mitochondrial function may play a role into several biological processes including cell migration, cell proliferation, T-cell activation, calcium homeostasis and cellular response to stress. May play a role in calcium homeostasis through negative regulation of calcium efflux from mitochondria. Required for mitochondrial hyperfusion a pro-survival cellular response to stress which results in increased ATP production by mitochondria. May also regulate the organization of functional domains at the plasma membrane and play a role in T-cell activation through association with the T-cell receptor signaling complex and its regulation. The chain is Stomatin-like protein 2, mitochondrial (STOML2) from Bos taurus (Bovine).